We begin with the raw amino-acid sequence, 861 residues long: DNA mismatch repair protein MutS (861 aa).

614-621 (GPNMGGKS) serves as a coordination point for ATP.

Belongs to the DNA mismatch repair MutS family.

This protein is involved in the repair of mismatches in DNA. It is possible that it carries out the mismatch recognition step. This protein has a weak ATPase activity. The protein is DNA mismatch repair protein MutS of Mannheimia succiniciproducens (strain KCTC 0769BP / MBEL55E).